The following is a 444-amino-acid chain: U-box domain-containing protein 31 (444 aa).

The 75-residue stretch at 59 to 133 (EIPSVFICPI…YTWFSQKYVL (75 aa)) folds into the U-box domain. 2 ARM repeats span residues 301–340 (KQVRNLLVRIGAVPQLVDVLPCLDVECLESALFVLDSLCL) and 343–382 (EGRIALKDSVNTIPHTVRLLMKVSEKCTNYAISILWSVCK).

The catalysed reaction is S-ubiquitinyl-[E2 ubiquitin-conjugating enzyme]-L-cysteine + [acceptor protein]-L-lysine = [E2 ubiquitin-conjugating enzyme]-L-cysteine + N(6)-ubiquitinyl-[acceptor protein]-L-lysine.. It functions in the pathway protein modification; protein ubiquitination. Functions as an E3 ubiquitin ligase. This Arabidopsis thaliana (Mouse-ear cress) protein is U-box domain-containing protein 31 (PUB31).